A 93-amino-acid polypeptide reads, in one-letter code: Phosphoribosyl-ATP pyrophosphatase (93 aa).

It belongs to the PRA-PH family.

It localises to the cytoplasm. The enzyme catalyses 1-(5-phospho-beta-D-ribosyl)-ATP + H2O = 1-(5-phospho-beta-D-ribosyl)-5'-AMP + diphosphate + H(+). It participates in amino-acid biosynthesis; L-histidine biosynthesis; L-histidine from 5-phospho-alpha-D-ribose 1-diphosphate: step 2/9. In Rhodococcus jostii (strain RHA1), this protein is Phosphoribosyl-ATP pyrophosphatase.